We begin with the raw amino-acid sequence, 1366 residues long: DNA-directed RNA polymerase subunit beta'' (1366 aa).

Zn(2+)-binding residues include cysteine 220, cysteine 290, cysteine 297, and cysteine 300.

This sequence belongs to the RNA polymerase beta' chain family. RpoC2 subfamily. In plastids the minimal PEP RNA polymerase catalytic core is composed of four subunits: alpha, beta, beta', and beta''. When a (nuclear-encoded) sigma factor is associated with the core the holoenzyme is formed, which can initiate transcription. The cofactor is Zn(2+).

It is found in the plastid. Its subcellular location is the chloroplast. It carries out the reaction RNA(n) + a ribonucleoside 5'-triphosphate = RNA(n+1) + diphosphate. Its function is as follows. DNA-dependent RNA polymerase catalyzes the transcription of DNA into RNA using the four ribonucleoside triphosphates as substrates. The polypeptide is DNA-directed RNA polymerase subunit beta'' (Lemna minor (Common duckweed)).